The chain runs to 1563 residues: Rab-3-interacting molecule unc-10 (1563 aa).

In terms of domain architecture, RabBD spans 7-133 (MPDLSHLSAE…AKTGKWFQPE (127 aa)). The span at 25–35 (FKRQKDEEAKE) shows a compositional bias: basic and acidic residues. The tract at residues 25-50 (FKRQKDEEAKETQISQKASEELSELD) is disordered. The FYVE-type zinc finger occupies 66–121 (TQDDAICQICQKTKFADGIGHKCFYCQLRSCARCGGRAQSKNKAIWACSLCQKRQQ). C72, C75, C88, C91, C96, C99, C113, and C116 together coordinate Zn(2+). Disordered regions lie at residues 128–466 (KWFQ…DHLN) and 582–605 (GGLDMQANRRRDKSLSLSPSRNDH). Residues 172-182 (NTPNYQNNQQP) are compositionally biased toward polar residues. Composition is skewed to low complexity over residues 190 to 284 (NHNQ…RNQT) and 300 to 316 (QTPQQQPSQYQNNVGAA). The segment covering 326–345 (QEQHHQQMNEQRTDNNRMRE) has biased composition (basic and acidic residues). 2 stretches are compositionally biased toward polar residues: residues 356–367 (RQPSLEQTTPMN) and 379–389 (QRPTFYTGNSE). The segment covering 395–415 (FDGQMQQGSQQNNQNQNQNNR) has biased composition (low complexity). The PDZ domain maps to 643–733 (HMILHRTENS…DTSVELIVSR (91 aa)). The C2 1 domain occupies 840 to 962 (IFGRIEVSFV…PLDGEHSLMC (123 aa)). 3 disordered regions span residues 1054–1163 (ENDI…YLGD), 1177–1311 (GQMT…GGSA), and 1346–1373 (VGIPGNLSSDRLTEPTPPFLKQASKEST). Residues 1086-1097 (WTQNHQRQSGYT) show a composition bias toward polar residues. A compositionally biased stretch (basic residues) spans 1112-1121 (YNRRQQRRPR). Residues 1129-1154 (MEREDMYDPTRKHRDDNEYSMRESVR) are compositionally biased toward basic and acidic residues. Low complexity predominate over residues 1181 to 1230 (PKQHNQQHQPHPLSQAHQQQQTAGVQPQHHQGFQQQQHPQQPNQQMQQMQ). The segment covering 1242-1255 (GSETLSVHSTNSMP) has biased composition (polar residues). The segment covering 1256–1277 (TTMTTVNRRNMNANNTSNDNTS) has biased composition (low complexity). Over residues 1278 to 1288 (FAETPTANTNR) the composition is skewed to polar residues. Residues 1297 to 1311 (NSLASSSSVAGGGSA) show a composition bias toward low complexity. One can recognise a C2 2 domain in the interval 1417 to 1536 (VLGEIQIALM…LGSQPLIGWY (120 aa)).

Restricted to discrete puncta in synapse-rich regions of the nervous system including the nerve ring, the ventral nerve cord and the dorsal nerve cord. Localized expression was found in the head.

The protein localises to the synapse. In terms of biological role, regulates the efficiency of a post-docking step of the release pathway. Acts after vesicle docking likely via regulating priming. May regulate the conformational changes in syntaxin. Binding of vesicles via rab-3[GTP] to Rim may signal the presence of a docked synaptic vesicle. Rim may then signal to unc-13 to change the conformation of syntaxin from the closed to the open state. Syntaxin could then engage synaptobrevin on the docked vesicle to form SNARE complexes and to prime the vesicle for release. Not required for the development or the structural organization of synapses. May play a role in regulating entry into the dauer state. The polypeptide is Rab-3-interacting molecule unc-10 (Caenorhabditis elegans).